Here is a 405-residue protein sequence, read N- to C-terminus: Replication factor C large subunit (405 aa).

Position 47–54 (47–54) interacts with ATP; that stretch reads GPPGVGKT.

The protein belongs to the activator 1 small subunits family. RfcL subfamily. Heteromultimer composed of small subunits (RfcS) and large subunits (RfcL).

Functionally, part of the RFC clamp loader complex which loads the PCNA sliding clamp onto DNA. In Saccharolobus islandicus (strain M.16.27) (Sulfolobus islandicus), this protein is Replication factor C large subunit.